The sequence spans 122 residues: MALTNEEILNAVAEKTVLELVELISAFEEKFNVSAAAVAVAAPAGGAAAAEEQSEFNVELTSFGANKVAVIKAVREATGLGLKEAKDLVEGAPQVLKEGVSKEEGEELKKKLEEAGATVTLK.

Belongs to the bacterial ribosomal protein bL12 family. In terms of assembly, homodimer. Part of the ribosomal stalk of the 50S ribosomal subunit. Forms a multimeric L10(L12)X complex, where L10 forms an elongated spine to which 2 to 4 L12 dimers bind in a sequential fashion. Binds GTP-bound translation factors.

Functionally, forms part of the ribosomal stalk which helps the ribosome interact with GTP-bound translation factors. Is thus essential for accurate translation. The protein is Large ribosomal subunit protein bL12 of Acinetobacter baumannii (strain AB0057).